The sequence spans 314 residues: Malate dehydrogenase (314 aa).

Residues 11 to 16 (GSGNIG) and Asp-35 contribute to the NAD(+) site. Substrate-binding residues include Arg-84 and Arg-90. NAD(+) is bound by residues Asn-97 and 120 to 122 (ITN). Substrate contacts are provided by Asn-122 and Arg-153. The Proton acceptor role is filled by His-177.

Belongs to the LDH/MDH superfamily. MDH type 3 family.

It catalyses the reaction (S)-malate + NAD(+) = oxaloacetate + NADH + H(+). Its function is as follows. Catalyzes the reversible oxidation of malate to oxaloacetate. The protein is Malate dehydrogenase of Rickettsia typhi (strain ATCC VR-144 / Wilmington).